We begin with the raw amino-acid sequence, 507 residues long: ATP synthase subunit alpha (507 aa).

Residue 169-176 coordinates ATP; it reads GDRQTGKT.

This sequence belongs to the ATPase alpha/beta chains family. In terms of assembly, F-type ATPases have 2 components, CF(1) - the catalytic core - and CF(0) - the membrane proton channel. CF(1) has five subunits: alpha(3), beta(3), gamma(1), delta(1), epsilon(1). CF(0) has three main subunits: a(1), b(2) and c(9-12). The alpha and beta chains form an alternating ring which encloses part of the gamma chain. CF(1) is attached to CF(0) by a central stalk formed by the gamma and epsilon chains, while a peripheral stalk is formed by the delta and b chains.

It localises to the cell membrane. It carries out the reaction ATP + H2O + 4 H(+)(in) = ADP + phosphate + 5 H(+)(out). Its function is as follows. Produces ATP from ADP in the presence of a proton gradient across the membrane. The alpha chain is a regulatory subunit. This chain is ATP synthase subunit alpha, found in Desulforudis audaxviator (strain MP104C).